A 181-amino-acid polypeptide reads, in one-letter code: Oligoribonuclease (181 aa).

Positions 8–171 (LIWIDLEMTG…QDIQESIAEL (164 aa)) constitute an Exonuclease domain. Residue Y129 is part of the active site.

This sequence belongs to the oligoribonuclease family.

It localises to the cytoplasm. Functionally, 3'-to-5' exoribonuclease specific for small oligoribonucleotides. In Shewanella sp. (strain ANA-3), this protein is Oligoribonuclease.